Here is a 574-residue protein sequence, read N- to C-terminus: DNA mismatch repair protein MutL (574 aa).

The protein belongs to the DNA mismatch repair MutL/HexB family.

This protein is involved in the repair of mismatches in DNA. It is required for dam-dependent methyl-directed DNA mismatch repair. May act as a 'molecular matchmaker', a protein that promotes the formation of a stable complex between two or more DNA-binding proteins in an ATP-dependent manner without itself being part of a final effector complex. The sequence is that of DNA mismatch repair protein MutL from Coxiella burnetii (strain Dugway 5J108-111).